The following is a 213-amino-acid chain: Small ribosomal subunit protein uS4 (213 aa).

The region spanning 97-165 is the S4 RNA-binding domain; it reads RRLDNVVYRM…AKEQLRIKNA (69 aa).

The protein belongs to the universal ribosomal protein uS4 family. As to quaternary structure, part of the 30S ribosomal subunit. Contacts protein S5. The interaction surface between S4 and S5 is involved in control of translational fidelity.

Functionally, one of the primary rRNA binding proteins, it binds directly to 16S rRNA where it nucleates assembly of the body of the 30S subunit. With S5 and S12 plays an important role in translational accuracy. The chain is Small ribosomal subunit protein uS4 from Psychrobacter sp. (strain PRwf-1).